A 435-amino-acid polypeptide reads, in one-letter code: Shikimate O-hydroxycinnamoyltransferase (435 aa).

Active-site proton acceptor residues include H153 and D382.

It belongs to the plant acyltransferase family. As to expression, highly expressed in stem vascular tissues.

The catalysed reaction is shikimate + 4-coumaroyl-CoA = trans-4-coumaroylshikimate + CoA. Functionally, acyltransferase involved in the biosynthesis of lignin. The affinity for shikimate as acceptor is 100-fold higher than for quinate. The most efficient donors are caffeoyl-CoA &gt; p-coumaroyl-CoA &gt; feruloyl-CoA &gt;&gt; sinapoyl-CoA. This Nicotiana tabacum (Common tobacco) protein is Shikimate O-hydroxycinnamoyltransferase (HST).